The following is a 289-amino-acid chain: Serine/threonine-protein phosphatase Pgam5, mitochondrial (289 aa).

Belongs to the phosphoglycerate mutase family. BPG-dependent PGAM subfamily. As to quaternary structure, interacts with Pk92B/ASK1.

The protein resides in the mitochondrion outer membrane. The catalysed reaction is O-phospho-L-seryl-[protein] + H2O = L-seryl-[protein] + phosphate. It carries out the reaction O-phospho-L-threonyl-[protein] + H2O = L-threonyl-[protein] + phosphate. Functionally, displays phosphatase activity for serine/threonine residues, and dephosphorylates and activates Pk92B kinase. Has apparently no phosphoglycerate mutase activity. This Drosophila mojavensis (Fruit fly) protein is Serine/threonine-protein phosphatase Pgam5, mitochondrial.